Here is a 156-residue protein sequence, read N- to C-terminus: MIQYIKGDLFTHAIPAGKKVILAHACNTHGSWGGGIAAVFRKKFPKSNNEYSQYCHKNSNLLGTSFIIESDQPNILIACLFTSDFNQTPEQIVHFTKQSIADLARKVSDYKEVEKCDGKVAINMPKINAGIFGVPWEDTESALQEFDNLHFNVYVI.

One can recognise a Macro domain in the interval 1 to 156; the sequence is MIQYIKGDLF…DNLHFNVYVI (156 aa). Substrate is bound by residues 7–9, 25–27, 32–37, and 127–133; these read GDL, ACN, WGGGIA, and INAGIFG.

The protein belongs to the POA1 family.

The enzyme catalyses ADP-alpha-D-ribose 1''-phosphate + H2O = ADP-D-ribose + phosphate. Highly specific phosphatase involved in the metabolism of ADP-ribose 1''-phosphate (Appr1p) which is produced as a consequence of tRNA splicing. The polypeptide is ADP-ribose 1''-phosphate phosphatase (POA1) (Candida albicans (strain SC5314 / ATCC MYA-2876) (Yeast)).